The following is a 265-amino-acid chain: 4-hydroxy-tetrahydrodipicolinate reductase (265 aa).

NAD(+) is bound by residues 9-14 (GALGRM), 100-102 (GTT), and 124-127 (SPNM). The active-site Proton donor/acceptor is the histidine 158. Histidine 159 provides a ligand contact to (S)-2,3,4,5-tetrahydrodipicolinate. Lysine 162 functions as the Proton donor in the catalytic mechanism. 168-169 (GT) lines the (S)-2,3,4,5-tetrahydrodipicolinate pocket.

Belongs to the DapB family.

The protein localises to the cytoplasm. The catalysed reaction is (S)-2,3,4,5-tetrahydrodipicolinate + NAD(+) + H2O = (2S,4S)-4-hydroxy-2,3,4,5-tetrahydrodipicolinate + NADH + H(+). It carries out the reaction (S)-2,3,4,5-tetrahydrodipicolinate + NADP(+) + H2O = (2S,4S)-4-hydroxy-2,3,4,5-tetrahydrodipicolinate + NADPH + H(+). It functions in the pathway amino-acid biosynthesis; L-lysine biosynthesis via DAP pathway; (S)-tetrahydrodipicolinate from L-aspartate: step 4/4. Functionally, catalyzes the conversion of 4-hydroxy-tetrahydrodipicolinate (HTPA) to tetrahydrodipicolinate. This is 4-hydroxy-tetrahydrodipicolinate reductase from Aquifex aeolicus (strain VF5).